Consider the following 169-residue polypeptide: Small ribosomal subunit protein uS13c (169 aa).

The N-terminal 47 residues, 1-47, are a transit peptide targeting the chloroplast; sequence MAQMVAMPVAHSLSLICNWAKSNPLSRNTLALPASNTPNKQSLSIRC.

The protein belongs to the universal ribosomal protein uS13 family. As to quaternary structure, part of the 30S ribosomal subunit.

It is found in the plastid. Its subcellular location is the chloroplast. Its function is as follows. Located at the top of the head of the 30S subunit, it contacts several helices of the 16S rRNA. The chain is Small ribosomal subunit protein uS13c (RPS13) from Arabidopsis thaliana (Mouse-ear cress).